We begin with the raw amino-acid sequence, 180 residues long: Homeobox protein ceh-12 (180 aa).

The interval 15–37 (SSQNEDQKLESHPSPPSQIPNYS) is disordered. Residues 110–169 (MRRPRTAFSSEQLVQLEKQFSDNRYLSRPRRYQLAQQLSLSETQIKIWFQNRRMKNKRCP) constitute a DNA-binding region (homeobox).

Expressed in VB motor neurons in the ventral nerve cord.

The protein localises to the nucleus. Its function is as follows. Transcription factor. Plays a role, downstream from homeobox protein unc-4 and Wnt signaling, in specifying synaptic inputs to A-class motor neurons. Involved in patterning of the synaptic outputs of the postmitotic DA class cholinergic motor neurons. The polypeptide is Homeobox protein ceh-12 (ceh-12) (Caenorhabditis elegans).